Reading from the N-terminus, the 52-residue chain is Large ribosomal subunit protein bL33A (52 aa).

This sequence belongs to the bacterial ribosomal protein bL33 family.

The protein is Large ribosomal subunit protein bL33A of Staphylococcus aureus (strain USA300).